A 284-amino-acid chain; its full sequence is Diaminopimelate epimerase (284 aa).

Asparagine 13 and asparagine 66 together coordinate substrate. Cysteine 75 functions as the Proton donor in the catalytic mechanism. Residues 76–77 (GN), asparagine 166, asparagine 199, and 217–218 (ER) contribute to the substrate site. The Proton acceptor role is filled by cysteine 226. Residue 227–228 (GT) coordinates substrate.

Belongs to the diaminopimelate epimerase family. Homodimer.

Its subcellular location is the cytoplasm. It catalyses the reaction (2S,6S)-2,6-diaminopimelate = meso-2,6-diaminopimelate. The protein operates within amino-acid biosynthesis; L-lysine biosynthesis via DAP pathway; DL-2,6-diaminopimelate from LL-2,6-diaminopimelate: step 1/1. In terms of biological role, catalyzes the stereoinversion of LL-2,6-diaminopimelate (L,L-DAP) to meso-diaminopimelate (meso-DAP), a precursor of L-lysine and an essential component of the bacterial peptidoglycan. This chain is Diaminopimelate epimerase, found in Halothermothrix orenii (strain H 168 / OCM 544 / DSM 9562).